A 169-amino-acid polypeptide reads, in one-letter code: Disulfide bond formation protein B 1 (169 aa).

The Cytoplasmic portion of the chain corresponds to 1–14 (MSDNTLYLRREKRF). The chain crosses the membrane as a helical span at residues 15–31 (LVLLGIICLALIGGALY). The Periplasmic segment spans residues 32 to 49 (MQVVLDEAPCPLCILQRY). Residues cysteine 41 and cysteine 44 are joined by a disulfide bond. The helical transmembrane segment at 50–65 (ALLFIAIFAFIGAAMP) threads the bilayer. The Cytoplasmic portion of the chain corresponds to 66 to 72 (GRRSVTA). Residues 73–89 (FETLVTLSALGGIAAAG) form a helical membrane-spanning segment. Residues 90–144 (RHVWILAHPSDSCGIDVLQPIVDGLPLATLFPTGFQVSGFCTTPYPPVLGLSLAQ) are Periplasmic-facing. Residues cysteine 102 and cysteine 130 are joined by a disulfide bond. A helical membrane pass occupies residues 145–163 (WALTAFVLTAVLVPACIIR). Residues 164–169 (NRRKPY) are Cytoplasmic-facing.

Belongs to the DsbB family.

It is found in the cell inner membrane. In terms of biological role, required for disulfide bond formation in some periplasmic proteins. Acts by oxidizing the DsbA protein. This Pseudomonas syringae pv. syringae (strain B728a) protein is Disulfide bond formation protein B 1.